We begin with the raw amino-acid sequence, 510 residues long: Cytochrome P450 monooxygenase btcC (510 aa).

Residues 1 to 21 (MSFPGVIFVVSFFPLLMGIAV) form a helical membrane-spanning segment. Cys-446 contributes to the heme binding site.

This sequence belongs to the cytochrome P450 family. It depends on heme as a cofactor.

The protein resides in the membrane. The protein operates within secondary metabolite biosynthesis; terpenoid biosynthesis. Cytochrome P450 monooxygenase; part of the gene cluster that mediates the biosynthesis of betaestacins. The bifunctional terpene synthase btcA converts isopentenyl diphosphate (IPP) and dimethylallyl diphosphate (DMAPP) into the sesterterpene betaestacin I. The C-terminal prenyltransferase (PT) domain of btcA catalyzes formation of GFPP, whereas the N-terminal terpene cyclase (TC) domain catalyzes the cyclization of GFPP into betaestacin I. The cytochrome P450 monooxygenase btcB is then responsible for the six-step oxidation of betaestacin I to yield betaestacin II. The roles of the cytochrome P450 monooxygenase btcC and the alpha-ketoglutarate-dependent dioxygenase btcD have not been identified yet. This is Cytochrome P450 monooxygenase btcC from Neocamarosporium betae (Beet black rot fungus).